The primary structure comprises 326 residues: tRNA-dihydrouridine(20/20a) synthase (326 aa).

FMN-binding positions include 11–13 (PML) and Gln-63. Residue Cys-93 is the Proton donor of the active site. FMN is bound by residues Lys-132, His-165, 205–207 (NGG), and 227–228 (GR).

Belongs to the Dus family. DusA subfamily. It depends on FMN as a cofactor.

It carries out the reaction 5,6-dihydrouridine(20) in tRNA + NADP(+) = uridine(20) in tRNA + NADPH + H(+). It catalyses the reaction 5,6-dihydrouridine(20) in tRNA + NAD(+) = uridine(20) in tRNA + NADH + H(+). The catalysed reaction is 5,6-dihydrouridine(20a) in tRNA + NADP(+) = uridine(20a) in tRNA + NADPH + H(+). The enzyme catalyses 5,6-dihydrouridine(20a) in tRNA + NAD(+) = uridine(20a) in tRNA + NADH + H(+). Functionally, catalyzes the synthesis of 5,6-dihydrouridine (D), a modified base found in the D-loop of most tRNAs, via the reduction of the C5-C6 double bond in target uridines. Specifically modifies U20 and U20a in tRNAs. The sequence is that of tRNA-dihydrouridine(20/20a) synthase from Vibrio parahaemolyticus serotype O3:K6 (strain RIMD 2210633).